Here is a 138-residue protein sequence, read N- to C-terminus: Acidic phospholipase A2 BE-I-PLA2 (138 aa).

Positions 1-16 are cleaved as a signal peptide; sequence MRTLWIMAVLLVGVEG. Cystine bridges form between cysteine 42-cysteine 131, cysteine 44-cysteine 60, cysteine 59-cysteine 111, cysteine 65-cysteine 138, cysteine 66-cysteine 104, cysteine 73-cysteine 97, and cysteine 91-cysteine 102. Positions 43, 45, and 47 each coordinate Ca(2+). Histidine 63 is an active-site residue. Position 64 (aspartate 64) interacts with Ca(2+). Aspartate 105 is an active-site residue.

The protein belongs to the phospholipase A2 family. Group II subfamily. D49 sub-subfamily. Ca(2+) serves as cofactor. As to expression, expressed by the venom gland.

It localises to the secreted. The catalysed reaction is a 1,2-diacyl-sn-glycero-3-phosphocholine + H2O = a 1-acyl-sn-glycero-3-phosphocholine + a fatty acid + H(+). Snake venom phospholipase A2 that shows a potent inhibition of human platelet aggregation. This inhibition is concentration-dependent when aggregation is induced by collagen, and concentration-independent when aggregation is induced by arachidonic acid. In human umbilical-cord vein endothelial cells, this toxin stimulates endothelial cells to release prostaglandin I(2), suggesting an increase of its potential anti-platelet activity in vivo. PLA2 catalyzes the calcium-dependent hydrolysis of the 2-acyl groups in 3-sn-phosphoglycerides. The sequence is that of Acidic phospholipase A2 BE-I-PLA2 from Bothrops erythromelas (Caatinga lance head).